The chain runs to 935 residues: Coatomer subunit gamma (935 aa).

HEAT repeat units lie at residues Pro258–Arg296, Pro337–Ser372, Lys373–Gln410, Trp412–Gln449, and Pro524–Lys562. Positions Lys630–Gly656 are disordered. At Thr638 the chain carries Phosphothreonine. A Phosphoserine modification is found at Ser643. Lys647 participates in a covalent cross-link: Glycyl lysine isopeptide (Lys-Gly) (interchain with G-Cter in ubiquitin). Ser653 is subject to Phosphoserine.

The protein belongs to the COPG family. Oligomeric complex that consists of at least the alpha, beta, beta', gamma, delta, epsilon and zeta subunits. Interacts (via C-terminus) with GEA1 (via N-terminal region) and KEI1 (via C-terminal region).

It is found in the cytoplasm. Its subcellular location is the golgi apparatus membrane. The protein resides in the cytoplasmic vesicle. The protein localises to the COPI-coated vesicle membrane. It localises to the endosome. In terms of biological role, the coatomer is a cytosolic protein complex that binds to dilysine motifs and reversibly associates with Golgi non-clathrin-coated vesicles, which further mediate biosynthetic protein transport from the ER, via the Golgi up to the trans Golgi network. Coatomer complex is required for budding from Golgi membranes, and is essential for the retrograde Golgi-to-ER transport of dilysine-tagged proteins. This chain is Coatomer subunit gamma (SEC21), found in Saccharomyces cerevisiae (strain ATCC 204508 / S288c) (Baker's yeast).